The chain runs to 294 residues: Acetylglutamate kinase (294 aa).

Substrate-binding positions include 63–64 (GG), Arg-85, and Asn-188.

It belongs to the acetylglutamate kinase family. ArgB subfamily.

It localises to the cytoplasm. The catalysed reaction is N-acetyl-L-glutamate + ATP = N-acetyl-L-glutamyl 5-phosphate + ADP. It functions in the pathway amino-acid biosynthesis; L-arginine biosynthesis; N(2)-acetyl-L-ornithine from L-glutamate: step 2/4. Its function is as follows. Catalyzes the ATP-dependent phosphorylation of N-acetyl-L-glutamate. The sequence is that of Acetylglutamate kinase from Methanococcus maripaludis (strain C5 / ATCC BAA-1333).